Consider the following 253-residue polypeptide: Major prion protein (253 aa).

Positions 1-22 (MANLGCWMLVLFVATWSNLGLC) are cleaved as a signal peptide. Residues 23 to 38 (KKRPKPGGWNTGGSRY) form an interaction with ADGRG6 region. Positions 23–230 (KKRPKPGGWN…ESQAYYQRGS (208 aa)) are interaction with GRB2, ERI3 and SYN1. The interval 25-108 (RPKPGGWNTG…WNKPSKPKTN (84 aa)) is disordered. 5 consecutive repeat copies span residues 51–59 (PQGGGGWGQ), 60–67 (PHGGGWGQ), 68–75 (PHGGGWGQ), 76–83 (PHGGGWGQ), and 84–91 (PHGGGWGQ). Positions 51–91 (PQGGGGWGQPHGGGWGQPHGGGWGQPHGGGWGQPHGGGWGQ) are 5 X 8 AA tandem repeats of P-H-G-G-G-W-G-Q. Over residues 52–95 (QGGGGWGQPHGGGWGQPHGGGWGQPHGGGWGQPHGGGWGQGGGT) the composition is skewed to gly residues. Positions 61, 62, 63, 69, 70, 71, 77, 78, 79, 85, 86, and 87 each coordinate Cu(2+). Cysteines 179 and 214 form a disulfide. N-linked (GlcNAc...) asparagine glycans are attached at residues Asn-181 and Asn-197. Ser-230 carries the GPI-anchor amidated serine lipid modification. Residues 231 to 253 (SMVLFSSPPVILLISFLIFLIVG) constitute a propeptide, removed in mature form.

This sequence belongs to the prion family. As to quaternary structure, monomer and homodimer. Has a tendency to aggregate into amyloid fibrils containing a cross-beta spine, formed by a steric zipper of superposed beta-strands. Soluble oligomers may represent an intermediate stage on the path to fibril formation. Copper binding may promote oligomerization. Interacts with GRB2, APP, ERI3/PRNPIP and SYN1. Mislocalized cytosolically exposed PrP interacts with MGRN1; this interaction alters MGRN1 subcellular location and causes lysosomal enlargement. Interacts with APP. Interacts with KIAA1191. Interacts with ADGRG6.

It is found in the cell membrane. The protein localises to the golgi apparatus. Its primary physiological function is unclear. May play a role in neuronal development and synaptic plasticity. May be required for neuronal myelin sheath maintenance. May promote myelin homeostasis through acting as an agonist for ADGRG6 receptor. May play a role in iron uptake and iron homeostasis. Soluble oligomers are toxic to cultured neuroblastoma cells and induce apoptosis (in vitro). Association with GPC1 (via its heparan sulfate chains) targets PRNP to lipid rafts. Also provides Cu(2+) or Zn(2+) for the ascorbate-mediated GPC1 deaminase degradation of its heparan sulfate side chains. In Pongo pygmaeus (Bornean orangutan), this protein is Major prion protein (PRNP).